The primary structure comprises 100 residues: Large ribosomal subunit protein uL23 (100 aa).

It belongs to the universal ribosomal protein uL23 family. Part of the 50S ribosomal subunit. Contacts protein L29, and trigger factor when it is bound to the ribosome.

Its function is as follows. One of the early assembly proteins it binds 23S rRNA. One of the proteins that surrounds the polypeptide exit tunnel on the outside of the ribosome. Forms the main docking site for trigger factor binding to the ribosome. This is Large ribosomal subunit protein uL23 from Buchnera aphidicola subsp. Baizongia pistaciae (strain Bp).